A 456-amino-acid polypeptide reads, in one-letter code: Gamma-aminobutyric acid receptor subunit alpha-1 (456 aa).

The signal sequence occupies residues 1–27 (MRKSPGLSDCLWAWILLLSTLTGRSYG). The Extracellular portion of the chain corresponds to 28-253 (QPSLQDELKD…FHLKRKIGYF (226 aa)). N-linked (GlcNAc...) asparagine glycosylation is present at asparagine 38. Arginine 94 lines the 4-aminobutanoate pocket. A glycan (N-linked (GlcNAc...) asparagine) is linked at asparagine 138. Threonine 157 contributes to the 4-aminobutanoate binding site. The cysteines at positions 166 and 180 are disulfide-linked. A helical transmembrane segment spans residues 254–274 (VIQTYLPCIMTVILSQVSFWL). Tryptophan 273 is a 3alpha-hydroxy-5alpha-pregnan-11,20-dione binding site. The Cytoplasmic segment spans residues 275-279 (NRESV). The helical transmembrane segment at 280–301 (PARTVFGVTTVLTMTTLSISAR) threads the bilayer. The Extracellular segment spans residues 302–311 (NSLPKVAYAT). A helical transmembrane segment spans residues 312–333 (AMDWFIAVCYAFVFSALIEFAT). Residues 334 to 421 (VNYFTKRGYA…TFNSVSKIDR (88 aa)) are Cytoplasmic-facing. Residues 422–441 (LSRIAFPLLFGIFNLVYWAT) form a helical membrane-spanning segment. Over 442-456 (YLNREPQLKAPTPHQ) the chain is Extracellular.

It belongs to the ligand-gated ion channel (TC 1.A.9) family. Gamma-aminobutyric acid receptor (TC 1.A.9.5) subfamily. GABRA1 sub-subfamily. Heteropentamer, formed by a combination of alpha (GABRA1-6), beta (GABRB1-3), gamma (GABRG1-3), delta (GABRD), epsilon (GABRE), rho (GABRR1-3), pi (GABRP) and theta (GABRQ) subunits, each subunit exhibiting distinct physiological and pharmacological properties. Interacts with UBQLN1. Interacts with TRAK1. Interacts with KIF21B. Identified in a complex of 720 kDa composed of LHFPL4, NLGN2, GABRA1, GABRB2, GABRG2 and GABRB3. Interacts with LHFPL4. Interacts with NLGN2. Interacts with SHISA7; interaction leads regulation of GABAAR trafficking, channel deactivation kinetics and pharmacology.

It localises to the postsynaptic cell membrane. Its subcellular location is the cell membrane. The protein resides in the cytoplasmic vesicle membrane. It carries out the reaction chloride(in) = chloride(out). Its activity is regulated as follows. Allosterically activated by benzodiazepines and the anesthetic alphaxalone. Allosterically activated by pentobarbital. Inhibited by the antagonist bicuculline. Potentiated by histamine. In terms of biological role, alpha subunit of the heteropentameric ligand-gated chloride channel gated by Gamma-aminobutyric acid (GABA), a major inhibitory neurotransmitter in the brain. GABA-gated chloride channels, also named GABA(A) receptors (GABAAR), consist of five subunits arranged around a central pore and contain GABA active binding site(s) located at the alpha and beta subunit interface(s). When activated by GABA, GABAARs selectively allow the flow of chloride anions across the cell membrane down their electrochemical gradient. Alpha-1/GABRA1-containing GABAARs are largely synaptic. Chloride influx into the postsynaptic neuron following GABAAR opening decreases the neuron ability to generate a new action potential, thereby reducing nerve transmission. GABAARs containing alpha-1 and beta-2 or -3 subunits exhibit synaptogenic activity; the gamma-2 subunit being necessary but not sufficient to induce rapid synaptic contacts formation. GABAARs function also as histamine receptor where histamine binds at the interface of two neighboring beta subunits and potentiates GABA response. GABAARs containing alpha, beta and epsilon subunits also permit spontaneous chloride channel activity while preserving the structural information required for GABA-gated openings. Alpha-1-mediated plasticity in the orbitofrontal cortex regulates context-dependent action selection. Together with rho subunits, may also control neuronal and glial GABAergic transmission in the cerebellum. In Homo sapiens (Human), this protein is Gamma-aminobutyric acid receptor subunit alpha-1.